Consider the following 323-residue polypeptide: Ribose-phosphate pyrophosphokinase 2 (323 aa).

Residues 43–45 (DGE) and 102–103 (RQ) contribute to the ATP site. Mg(2+)-binding residues include His136 and Asp177. The active site involves Lys200. Residues Arg202, Asp226, and 230–234 (DTAGT) each bind D-ribose 5-phosphate.

It belongs to the ribose-phosphate pyrophosphokinase family. Class I subfamily. In terms of assembly, homohexamer. The cofactor is Mg(2+).

The protein resides in the cytoplasm. The catalysed reaction is D-ribose 5-phosphate + ATP = 5-phospho-alpha-D-ribose 1-diphosphate + AMP + H(+). It functions in the pathway metabolic intermediate biosynthesis; 5-phospho-alpha-D-ribose 1-diphosphate biosynthesis; 5-phospho-alpha-D-ribose 1-diphosphate from D-ribose 5-phosphate (route I): step 1/1. Involved in the biosynthesis of the central metabolite phospho-alpha-D-ribosyl-1-pyrophosphate (PRPP) via the transfer of pyrophosphoryl group from ATP to 1-hydroxyl of ribose-5-phosphate (Rib-5-P). In Enterococcus faecalis (strain ATCC 700802 / V583), this protein is Ribose-phosphate pyrophosphokinase 2.